A 252-amino-acid polypeptide reads, in one-letter code: MTSHAPDPVHQFEVSRLINISIGNMDLSFTNVSFFIVATVVVSSVFLFISSSSRGLVPTRMQSVSEMAYEFVASTLRESSGVQGMQFFPLVFSLFTFILVANFIGLFPYFYTITSQIMITFSLAMLVIFTVISYGFYKHGVGFLKLFVPSGVPVLILPLVTMIEVISFFSRPISLSLRLFANMLAGHITLKVFSGFIVSMIGIGIMGVGGSILPLIMTVAITALEFLVAFLQAYVFTVLTCMYLNDAVHPGH.

6 helical membrane passes run 29 to 49 (FTNV…FLFI), 87 to 107 (FFPL…IGLF), 117 to 137 (IMIT…YGFY), 146 to 166 (LFVP…IEVI), 196 to 216 (FIVS…LPLI), and 219 to 239 (VAIT…FTVL).

This sequence belongs to the ATPase A chain family. In terms of assembly, F-type ATPases have 2 components, CF(1) - the catalytic core - and CF(0) - the membrane proton channel. CF(1) has five subunits: alpha(3), beta(3), gamma(1), delta(1), epsilon(1). CF(0) has three main subunits: a(1), b(2) and c(9-12). The alpha and beta chains form an alternating ring which encloses part of the gamma chain. CF(1) is attached to CF(0) by a central stalk formed by the gamma and epsilon chains, while a peripheral stalk is formed by the delta and b chains.

The protein localises to the cell inner membrane. Key component of the proton channel; it plays a direct role in the translocation of protons across the membrane. This chain is ATP synthase subunit a, found in Bartonella henselae (strain ATCC 49882 / DSM 28221 / CCUG 30454 / Houston 1) (Rochalimaea henselae).